A 312-amino-acid polypeptide reads, in one-letter code: Homoserine O-succinyltransferase (312 aa).

Cys-142 serves as the catalytic Acyl-thioester intermediate. Substrate is bound by residues Lys-163 and Ser-192. Catalysis depends on His-235, which acts as the Proton acceptor. Residue Glu-237 is part of the active site. Arg-249 is a substrate binding site.

It belongs to the MetA family.

It localises to the cytoplasm. The catalysed reaction is L-homoserine + succinyl-CoA = O-succinyl-L-homoserine + CoA. It participates in amino-acid biosynthesis; L-methionine biosynthesis via de novo pathway; O-succinyl-L-homoserine from L-homoserine: step 1/1. Functionally, transfers a succinyl group from succinyl-CoA to L-homoserine, forming succinyl-L-homoserine. This is Homoserine O-succinyltransferase from Aliivibrio salmonicida (strain LFI1238) (Vibrio salmonicida (strain LFI1238)).